We begin with the raw amino-acid sequence, 81 residues long: Sec-independent protein translocase protein TatA (81 aa).

The chain crosses the membrane as a helical span at residues 1–21 (MGMPSGQELLIILAIVVLLFG). Residues 45–81 (NEDDDTEVKSASTEAPKKVESAEEVASKESSKTPTQA) are disordered. Over residues 59 to 75 (APKKVESAEEVASKESS) the composition is skewed to basic and acidic residues.

Belongs to the TatA/E family. As to quaternary structure, the Tat system comprises two distinct complexes: a TatABC complex, containing multiple copies of TatA, TatB and TatC subunits, and a separate TatA complex, containing only TatA subunits. Substrates initially bind to the TatABC complex, which probably triggers association of the separate TatA complex to form the active translocon.

It localises to the cell inner membrane. Part of the twin-arginine translocation (Tat) system that transports large folded proteins containing a characteristic twin-arginine motif in their signal peptide across membranes. TatA could form the protein-conducting channel of the Tat system. The protein is Sec-independent protein translocase protein TatA of Sulfurimonas denitrificans (strain ATCC 33889 / DSM 1251) (Thiomicrospira denitrificans (strain ATCC 33889 / DSM 1251)).